Reading from the N-terminus, the 1374-residue chain is Probable multidrug resistance-associated protein lethal(2)03659 (1374 aa).

The interval 1-40 (MDKQPVLEPTFDSVSERENTSIEESSLLENNGFDHRNKDE) is disordered. 6 helical membrane-spanning segments follow: residues 159–179 (LLRVFGWQLGFPGLAIFVVEL), 205–225 (AGFYYAVAQIVISALTVMILT), 282–302 (YTVHYLWVGPLQVLVITYLMY), 305–325 (IGISAVFGVLFMLLFMPIQMY), 404–424 (IFLSLVGYVILGKVFTPEIAF), and 426–446 (ITAYYNVLLAAMSIYVPSAII). Residues 168–449 (GFPGLAIFVV…YVPSAIIQTA (282 aa)) form the ABC transmembrane type-1 1 domain. The segment at 466–492 (ELGSSDKSEGPSKDTVPGNPPSNNNEA) is disordered. Positions 499–722 (ISIRDLKAKW…GLITGLGSLS (224 aa)) constitute an ABC transporter 1 domain. Residue 534–541 (GLTGSGKS) participates in ATP binding. Asparagine 561 carries N-linked (GlcNAc...) asparagine glycosylation. A disordered region spans residues 723–766 (KTDKAKTEEQEPLNLNSPDNKNEVTPIKENSEQTVGGSSSGKEH). The next 5 helical transmembrane spans lie at 787–807 (GGGLVAFLVMLSSSVLAQVAV), 845–865 (LIIILSVIMNLSSSFLLFNIA), 913–933 (VVLVDVMQIALWLAGIIIVIA), 938–958 (LLLVPTLMLSVIFYHLRNLYL), and 1025–1045 (YCMNCICVIYISIITLSFFAF). Residues 793–1079 (FLVMLSSSVL…GVRQTAELEN (287 aa)) form the ABC transmembrane type-1 2 domain. In terms of domain architecture, ABC transporter 2 spans 1119–1352 (FKELNLRYTP…SDSKVFHNLV (234 aa)). Residue 1153–1160 (GRTGAGKS) coordinates ATP. Asparagine 1254 and asparagine 1353 each carry an N-linked (GlcNAc...) asparagine glycan.

The protein belongs to the ABC transporter superfamily. ABCC family. Conjugate transporter (TC 3.A.1.208) subfamily. Uniform expression in embryos.

It localises to the membrane. Its function is as follows. Vital for development. In Drosophila melanogaster (Fruit fly), this protein is Probable multidrug resistance-associated protein lethal(2)03659 (l(2)03659).